Consider the following 137-residue polypeptide: Large ribosomal subunit protein uL16 (137 aa).

Belongs to the universal ribosomal protein uL16 family. Part of the 50S ribosomal subunit.

In terms of biological role, binds 23S rRNA and is also seen to make contacts with the A and possibly P site tRNAs. The chain is Large ribosomal subunit protein uL16 from Bartonella henselae (strain ATCC 49882 / DSM 28221 / CCUG 30454 / Houston 1) (Rochalimaea henselae).